Reading from the N-terminus, the 426-residue chain is Serine--tRNA ligase (426 aa).

T231 to E233 is a binding site for L-serine. R262–E264 lines the ATP pocket. E285 is a binding site for L-serine. E349 to S352 provides a ligand contact to ATP. L-serine is bound at residue S385.

It belongs to the class-II aminoacyl-tRNA synthetase family. Type-1 seryl-tRNA synthetase subfamily. In terms of assembly, homodimer. The tRNA molecule binds across the dimer.

It localises to the cytoplasm. It catalyses the reaction tRNA(Ser) + L-serine + ATP = L-seryl-tRNA(Ser) + AMP + diphosphate + H(+). It carries out the reaction tRNA(Sec) + L-serine + ATP = L-seryl-tRNA(Sec) + AMP + diphosphate + H(+). It functions in the pathway aminoacyl-tRNA biosynthesis; selenocysteinyl-tRNA(Sec) biosynthesis; L-seryl-tRNA(Sec) from L-serine and tRNA(Sec): step 1/1. Functionally, catalyzes the attachment of serine to tRNA(Ser). Is also able to aminoacylate tRNA(Sec) with serine, to form the misacylated tRNA L-seryl-tRNA(Sec), which will be further converted into selenocysteinyl-tRNA(Sec). The sequence is that of Serine--tRNA ligase from Myxococcus xanthus (strain DK1622).